Here is a 1158-residue protein sequence, read N- to C-terminus: Putative HERC2-like protein 3 (1158 aa).

The interval 281–302 (PRKKRVPKKPESTDDEEKIGNE) is disordered. Positions 293–302 (TDDEEKIGNE) are enriched in acidic residues. The MIB/HERC2 domain occupies 587-660 (SGPELAAMMK…NYDLKLAELP (74 aa)). The segment at 662–684 (PAQPSAEDSDTEDDSEAEQTERN) is disordered. A compositionally biased stretch (acidic residues) spans 668–679 (EDSDTEDDSEAE).

This chain is Putative HERC2-like protein 3 (HERC2P3), found in Homo sapiens (Human).